The following is a 380-amino-acid chain: Acyl-lipid (9+3)-(E)-desaturase (380 aa).

Positions 1–25 (MGAGGCISVSETKPNQKNSLERAPY) are disordered. A compositionally biased stretch (polar residues) spans 9–18 (VSETKPNQKN). Transmembrane regions (helical) follow at residues 52–72 (LSYV…TTYF) and 81–101 (ALAW…VWVI). The Histidine box-1 signature appears at 103-107 (HECGH). The Histidine box-2 motif lies at 139–143 (HRRHH). The next 3 helical transmembrane spans lie at 177 to 197 (IGVL…FNVS), 223 to 243 (IYLS…AAMV), and 247 to 267 (VWLI…LVLV). Positions 313-317 (HIVHH) match the Histidine box-3 motif.

The protein belongs to the fatty acid desaturase type 1 family.

The protein localises to the membrane. The enzyme catalyses a (9Z)-octadecenoyl-containing glycerolipid + 2 Fe(II)-[cytochrome b5] + O2 + 2 H(+) = a (9Z,12E)-octadecadienoyl-containing glycerolipid + 2 Fe(III)-[cytochrome b5] + 2 H2O. It catalyses the reaction a (9Z)-hexadecenoyl-containing glycerolipid + 2 Fe(II)-[cytochrome b5] + O2 + 2 H(+) = a (9Z,12E)-hexadecadienoyl-containing glycerolipid + 2 Fe(III)-[cytochrome b5] + 2 H2O. Its function is as follows. Involved in the biosynthesis of dimorphecolic acid (9-OH-18:2(10E,12E)). Converts oleic acid (18:1(9Z)) into 18:2(9Z,12E) and probably palmitoleic acid (16:1(9Z)) into 16:2(9Z,12E). Very limited ability to catalyze (Z)-delta(12) desaturation. This Dimorphotheca sinuata (African daisy) protein is Acyl-lipid (9+3)-(E)-desaturase.